Consider the following 493-residue polypeptide: Calcium-binding tyrosine phosphorylation-regulated protein (493 aa).

Residues 12 to 49 (YGLKTLLEGISRAVLKTNPSNINQFAAAYFQELTMYRG) enclose the RIIa domain. Disordered stretches follow at residues 85–164 (EPGK…VSPE), 244–271 (DLGS…QEPP), 330–354 (NEQS…TTSG), and 426–493 (IVSD…STAE). Over residues 90-100 (SVESKVPTQME) the composition is skewed to polar residues. The segment covering 101-117 (KSTDTDEDNVTRTEYSD) has biased composition (basic and acidic residues). Residues 141-152 (SSKPATPKTTTP) show a composition bias toward low complexity. A Phosphothreonine modification is found at Thr-151. At Ser-155 the chain carries Phosphoserine. Polar residues-rich tracts occupy residues 426 to 442 (IVSD…NSVP) and 461 to 470 (SGTSVKSSSG). Positions 484–493 (IEPEGESTAE) are enriched in acidic residues.

As to quaternary structure, interacts with FSCB. Isoform 3 self-associates. Isoform 3 and isoform 5 interact with GSK3B. Isoform 1 does not interact with GSK3B. Isoform 1 is phosphorylated on tyrosine residues during in vitro capacitation. Isoform 3 and isoform 5 are phosphorylated by GSK3B in vitro. Dephosphorylation affects its ability to bind calcium. In terms of tissue distribution, expressed in elongating spermatids and spermatozoa (at protein level). Isoform 1 is expressed in testis. Isoform 3 and isoform 5 are also expressed in brain, pancreas and numerous brain tumors.

The protein localises to the cytoplasm. It is found in the cytoskeleton. The protein resides in the cell projection. Its subcellular location is the cilium. It localises to the flagellum. The protein localises to the nucleus. Functionally, may function as a regulator of both motility- and head-associated functions such as capacitation and the acrosome reaction. Isoform 1 binds calcium in vitro. Isoform 2 and isoform 6 probably bind calcium. Isoform 3 and isoform 5 do not bind calcium in vitro. Isoform 4 probably does not bind calcium. This Homo sapiens (Human) protein is Calcium-binding tyrosine phosphorylation-regulated protein (CABYR).